We begin with the raw amino-acid sequence, 340 residues long: Nuclear transcription factor Y subunit A-3 (340 aa).

Residues 43-116 (SLSLKVDSRP…KGFASNPKQG (74 aa)) are disordered. Residues 60-77 (QISFQDQDSSSTQSTGQS) show a composition bias toward low complexity. Polar residues predominate over residues 78–103 (YTEVASSGDDNPSRQISFSAKSGSEI). A Subunit association domain (SAD) motif is present at residues 182–205 (FVNAKQYHAIMRRRQQRAKLEAQN). A DNA-binding region (NFYA/HAP2-type) is located at residues 212–237 (KPYLHESRHVHALKRPRGSGGRFLNT).

This sequence belongs to the NFYA/HAP2 subunit family. As to quaternary structure, heterotrimeric transcription factor composed of three components, NF-YA, NF-YB and NF-YC. NF-YB and NF-YC must interact and dimerize for NF-YA association and DNA binding. Ubiquitous.

It localises to the nucleus. Stimulates the transcription of various genes by recognizing and binding to a CCAAT motif in promoters. The sequence is that of Nuclear transcription factor Y subunit A-3 (NFYA3) from Arabidopsis thaliana (Mouse-ear cress).